A 1362-amino-acid polypeptide reads, in one-letter code: ATP-dependent RNA helicase dhx29 (1362 aa).

Over residues 1 to 10 (MGGKNKKNRH) the composition is skewed to basic residues. The tract at residues 1-76 (MGGKNKKNRH…FASSSDSGVS (76 aa)) is disordered. Positions 18–27 (GATAAANRPR) are enriched in low complexity. A compositionally biased stretch (basic and acidic residues) spans 28–41 (AAAEPRPGGEDAAK). Positions 66–76 (SFASSSDSGVS) are enriched in low complexity. Residues 89–109 (EAKLEKRIISLINEHKKLNSN) adopt a coiled-coil conformation. 2 disordered regions span residues 182–215 (QRARAKFQAPPQRPSAANESATEKGEEGASLKGN) and 229–257 (EQGSDDDDDDDDVKEEEKETTLEKFDPNE). The segment covering 231–242 (GSDDDDDDDDVK) has biased composition (acidic residues). The segment covering 243-257 (EEEKETTLEKFDPNE) has biased composition (basic and acidic residues). Positions 285 to 305 (QKEAQERIRGYQQEMKSLEDH) form a coiled coil. Residues 317–336 (VKSESKQPKPALPPSEDEPL) form a disordered region. Positions 576–749 (LETLKRHRVI…FTHCPIIRIS (174 aa)) constitute a Helicase ATP-binding domain. 589 to 596 (GETGSGKS) serves as a coordination point for ATP. The DEAH box motif lies at 696 to 699 (DEVH). In terms of domain architecture, Helicase C-terminal spans 852 to 1021 (DISPEYRNVE…ELCLHIMKCD (170 aa)).

Belongs to the DEAD box helicase family. DEAH subfamily. As to quaternary structure, part of the 43S pre-initiation complex (PIC).

It is found in the cytoplasm. It carries out the reaction ATP + H2O = ADP + phosphate + H(+). Its function is as follows. ATP-binding RNA helicase involved in translation initiation. Part of the 43S pre-initiation complex that is required for efficient initiation on mRNAs of higher eukaryotes with structured 5'-UTRs by promoting efficient NTPase-dependent 48S complex formation. Specifically binds to the 40S ribosome near the mRNA entrance. Does not possess a processive helicase activity. The protein is ATP-dependent RNA helicase dhx29 of Xenopus laevis (African clawed frog).